Here is a 428-residue protein sequence, read N- to C-terminus: Probable protein phosphatase 2C 12 (428 aa).

The 270-residue stretch at 24–293 folds into the PPM-type phosphatase domain; it reads KIDNPELIHG…DDTTCIVVDI (270 aa). 4 residues coordinate Mn(2+): D69, G70, D245, and D284. The interval 301 to 331 is disordered; it reads ASVPPPKKQGKGMLKSMFKRKTSDSSSNIEK.

Belongs to the PP2C family. The cofactor is Mg(2+). It depends on Mn(2+) as a cofactor.

It carries out the reaction O-phospho-L-seryl-[protein] + H2O = L-seryl-[protein] + phosphate. It catalyses the reaction O-phospho-L-threonyl-[protein] + H2O = L-threonyl-[protein] + phosphate. The sequence is that of Probable protein phosphatase 2C 12 from Arabidopsis thaliana (Mouse-ear cress).